The primary structure comprises 466 residues: Soluble pyridine nucleotide transhydrogenase (466 aa).

Position 36 to 45 (glutamate 36 to cysteine 45) interacts with FAD.

This sequence belongs to the class-I pyridine nucleotide-disulfide oxidoreductase family. FAD serves as cofactor.

The protein resides in the cytoplasm. It catalyses the reaction NAD(+) + NADPH = NADH + NADP(+). Conversion of NADPH, generated by peripheral catabolic pathways, to NADH, which can enter the respiratory chain for energy generation. The sequence is that of Soluble pyridine nucleotide transhydrogenase from Vibrio vulnificus (strain CMCP6).